Consider the following 66-residue polypeptide: Photosystem II reaction center protein J (66 aa).

The helical transmembrane segment at 36 to 56 (LWLVATAGGIAVIFVLGIFFY) threads the bilayer.

It belongs to the PsbJ family. PSII is composed of 1 copy each of membrane proteins PsbA, PsbB, PsbC, PsbD, PsbE, PsbF, PsbH, PsbI, PsbJ, PsbK, PsbL, PsbM, PsbT, PsbX, PsbY, Psb30/Ycf12, peripheral proteins PsbO, CyanoQ (PsbQ), PsbU, PsbV and a large number of cofactors. It forms dimeric complexes.

The protein localises to the cellular thylakoid membrane. One of the components of the core complex of photosystem II (PSII). PSII is a light-driven water:plastoquinone oxidoreductase that uses light energy to abstract electrons from H(2)O, generating O(2) and a proton gradient subsequently used for ATP formation. It consists of a core antenna complex that captures photons, and an electron transfer chain that converts photonic excitation into a charge separation. The protein is Photosystem II reaction center protein J of Prochlorococcus marinus (strain MIT 9215).